A 198-amino-acid chain; its full sequence is Peroxiredoxin-2 (198 aa).

An N-acetylalanine modification is found at Ala2. Residues 6–164 (ARIGKPAPDF…ALRLVQAFQY (159 aa)) enclose the Thioredoxin domain. Residue Cys51 is the Cysteine sulfenic acid (-SOH) intermediate of the active site. Ser112 carries the post-translational modification Phosphoserine. Residue Thr182 is modified to Phosphothreonine. Lys196 is modified (N6-acetyllysine).

The protein belongs to the peroxiredoxin family. AhpC/Prx1 subfamily. In terms of assembly, homodimer; disulfide-linked, upon oxidation. 5 homodimers assemble to form a ring-like decamer. Interacts with TIPIN. Post-translationally, the enzyme can be inactivated by further oxidation of the cysteine sulfenic acid (C(P)-SOH) to sulphinic acid (C(P)-SO2H) instead of its condensation to a disulfide bond. It can be reactivated by forming a transient disulfide bond with sulfiredoxin SRXN1, which reduces the cysteine sulfinic acid in an ATP- and Mg-dependent manner. Acetylation increases resistance to transition to high molecular-mass complexes. Deacetylated by HDAC6 which decreases reducing activity.

The protein localises to the cytoplasm. It catalyses the reaction a hydroperoxide + [thioredoxin]-dithiol = an alcohol + [thioredoxin]-disulfide + H2O. Functionally, thiol-specific peroxidase that catalyzes the reduction of hydrogen peroxide and organic hydroperoxides to water and alcohols, respectively. Plays a role in cell protection against oxidative stress by detoxifying peroxides and as sensor of hydrogen peroxide-mediated signaling events. Might participate in the signaling cascades of growth factors and tumor necrosis factor-alpha by regulating the intracellular concentrations of H(2)O(2). The sequence is that of Peroxiredoxin-2 (PRDX2) from Macaca fascicularis (Crab-eating macaque).